The primary structure comprises 134 residues: UPF0719 transmembrane protein YshE (134 aa).

The next 4 helical transmembrane spans lie at 10–30, 48–68, 78–98, and 114–134; these read VEIA…LTVF, AVAM…QHSI, IGWG…FEFL, and AVGF…AAGI.

It belongs to the UPF0719 family.

The protein localises to the cell membrane. The sequence is that of UPF0719 transmembrane protein YshE (yshE) from Bacillus subtilis (strain 168).